The sequence spans 593 residues: UvrABC system protein C (593 aa).

Residues 17 to 94 enclose the GIY-YIG domain; the sequence is MEPGCYLMKD…IKQYQPRYNI (78 aa). The UVR domain occupies 199–234; that stretch reads KTILKSLEERMLTASESLDFERAKEYRDLIQHIQNL.

It belongs to the UvrC family. As to quaternary structure, interacts with UvrB in an incision complex.

It localises to the cytoplasm. The UvrABC repair system catalyzes the recognition and processing of DNA lesions. UvrC both incises the 5' and 3' sides of the lesion. The N-terminal half is responsible for the 3' incision and the C-terminal half is responsible for the 5' incision. This is UvrABC system protein C from Staphylococcus aureus (strain Mu3 / ATCC 700698).